Here is an 87-residue protein sequence, read N- to C-terminus: U3-theraphotoxin-Hhn1a 8 (87 aa).

A signal peptide spans 1–24; that stretch reads MVNMKASMFLTFAGLVLLFVVCYA. The propeptide occupies 25–52; the sequence is SGSEEKEFPKEMLSSIFAVDNDFKQEER. Cystine bridges form between cysteine 54–cysteine 67, cysteine 61–cysteine 72, and cysteine 66–cysteine 79.

This sequence belongs to the neurotoxin 10 (Hwtx-1) family. 51 (Hntx-8) subfamily. Hntx-8 sub-subfamily. As to expression, expressed by the venom gland.

The protein localises to the secreted. In terms of biological role, ion channel inhibitor. The polypeptide is U3-theraphotoxin-Hhn1a 8 (Cyriopagopus hainanus (Chinese bird spider)).